Consider the following 653-residue polypeptide: Rab proteins geranylgeranyltransferase component A 1 (653 aa).

The disordered stretch occupies residues 606–653; it reads PPPPNPEDIILDGDSLQPEASESSAIPEANSETFKESTNLGNLEESSE. The segment covering 623 to 646 has biased composition (polar residues); it reads PEASESSAIPEANSETFKESTNLG.

The protein belongs to the Rab GDI family. As to quaternary structure, monomer. Heterotrimer composed of RABGGTA, RABGGTB and CHM; within this trimer, RABGGTA and RABGGTB form the catalytic component B, while CHM (component A) mediates Rab protein binding. Can associate with the Rab GGTase dimer (RGGT or component B) prior to Rab protein binding; the association is stabilized by geranylgeranyl pyrophosphate (GGpp). The CHM:RGGT:Rab complex is destabilized by GGpp. Interacts with RAB1A, RAB1B, RAB5A, RAB7A and RAB27A and mediates their prenylation. Interacts with the non-phosphorylated forms of RAB3A, RAB3B, RAB3C, RAB3D, RAB5B, RAB5C, RAB8A, RAB8B, RAB10, RAB12, RAB35, and RAB43.

It localises to the cytoplasm. The protein resides in the cytosol. Substrate-binding subunit of the Rab geranylgeranyltransferase (GGTase) complex. Binds unprenylated Rab proteins and presents the substrate peptide to the catalytic component B composed of RABGGTA and RABGGTB, and remains bound to it after the geranylgeranyl transfer reaction. The component A is thought to be regenerated by transferring its prenylated Rab back to the donor membrane. Besides, a pre-formed complex consisting of CHM and the Rab GGTase dimer (RGGT or component B) can bind to and prenylate Rab proteins; this alternative pathway is proposed to be the predominant pathway for Rab protein geranylgeranylation. This Homo sapiens (Human) protein is Rab proteins geranylgeranyltransferase component A 1 (CHM).